A 214-amino-acid chain; its full sequence is Glycerol-3-phosphate acyltransferase (214 aa).

The next 5 membrane-spanning stretches (helical) occupy residues 8–28 (LILA…QIFF), 70–90 (LLPL…LIAV), 111–131 (AGVV…IFIV), 144–164 (IVVA…GIIL), and 165–185 (PSYD…ILIR).

This sequence belongs to the PlsY family. Probably interacts with PlsX.

The protein localises to the cell membrane. It carries out the reaction an acyl phosphate + sn-glycerol 3-phosphate = a 1-acyl-sn-glycero-3-phosphate + phosphate. It functions in the pathway lipid metabolism; phospholipid metabolism. Functionally, catalyzes the transfer of an acyl group from acyl-phosphate (acyl-PO(4)) to glycerol-3-phosphate (G3P) to form lysophosphatidic acid (LPA). This enzyme utilizes acyl-phosphate as fatty acyl donor, but not acyl-CoA or acyl-ACP. The polypeptide is Glycerol-3-phosphate acyltransferase (Streptococcus gordonii (strain Challis / ATCC 35105 / BCRC 15272 / CH1 / DL1 / V288)).